Here is a 296-residue protein sequence, read N- to C-terminus: Acetylglutamate kinase (296 aa).

Residues 69–70 (GG), Arg-91, and Asn-193 each bind substrate.

This sequence belongs to the acetylglutamate kinase family. ArgB subfamily.

It localises to the cytoplasm. The enzyme catalyses N-acetyl-L-glutamate + ATP = N-acetyl-L-glutamyl 5-phosphate + ADP. The protein operates within amino-acid biosynthesis; L-arginine biosynthesis; N(2)-acetyl-L-ornithine from L-glutamate: step 2/4. Catalyzes the ATP-dependent phosphorylation of N-acetyl-L-glutamate. The protein is Acetylglutamate kinase of Delftia acidovorans (strain DSM 14801 / SPH-1).